Here is a 278-residue protein sequence, read N- to C-terminus: Elongation factor Ts (278 aa).

Positions 82 to 85 are involved in Mg(2+) ion dislocation from EF-Tu; sequence TDFV.

Belongs to the EF-Ts family.

It is found in the cytoplasm. Its function is as follows. Associates with the EF-Tu.GDP complex and induces the exchange of GDP to GTP. It remains bound to the aminoacyl-tRNA.EF-Tu.GTP complex up to the GTP hydrolysis stage on the ribosome. The sequence is that of Elongation factor Ts from Streptomyces avermitilis (strain ATCC 31267 / DSM 46492 / JCM 5070 / NBRC 14893 / NCIMB 12804 / NRRL 8165 / MA-4680).